The primary structure comprises 484 residues: UBX domain-containing protein 11 (484 aa).

Residues 1 to 28 (MSSPLASLSKTRKVPLESESVNPGRRGI) are disordered. A coiled-coil region spans residues 69-147 (HDSELMASMT…IGEMERFLSD (79 aa)). In terms of domain architecture, SEP spans 227–291 (LEPIPLKVYR…VSDLRNQIYP (65 aa)). Residues 389 to 466 (PMPLLSMLRI…GLVPNATLLL (78 aa)) form the UBX domain. Residues serine 478 and serine 482 each carry the phosphoserine modification.

As to quaternary structure, interacts with GNA12, GNA13, RND1, RND2 and RND3.

It is found in the cytoplasm. The protein resides in the cytoskeleton. In terms of biological role, may be involved in the reorganization of actin cytoskeleton mediated by RND1, RND2 and RND3. Promotes RHOA activation mediated by GNA12 and GNA13. This is UBX domain-containing protein 11 (Ubxn11) from Mus musculus (Mouse).